A 205-amino-acid polypeptide reads, in one-letter code: Large ribosomal subunit protein bL21m (205 aa).

Residues 1–39 constitute a mitochondrion transit peptide; the sequence is MAASSLTVTLGRLASACSHSILRPSGPGAASLWSASRRF.

This sequence belongs to the bacterial ribosomal protein bL21 family. As to quaternary structure, component of the mitochondrial large ribosomal subunit (mt-LSU). Mature mammalian 55S mitochondrial ribosomes consist of a small (28S) and a large (39S) subunit. The 28S small subunit contains a 12S ribosomal RNA (12S mt-rRNA) and 30 different proteins. The 39S large subunit contains a 16S rRNA (16S mt-rRNA), a copy of mitochondrial valine transfer RNA (mt-tRNA(Val)), which plays an integral structural role, and 52 different proteins.

It localises to the mitochondrion. The polypeptide is Large ribosomal subunit protein bL21m (MRPL21) (Homo sapiens (Human)).